The following is a 290-amino-acid chain: 33 kDa chaperonin (290 aa).

Cystine bridges form between cysteine 235/cysteine 237 and cysteine 268/cysteine 271.

Belongs to the HSP33 family. In terms of processing, under oxidizing conditions two disulfide bonds are formed involving the reactive cysteines. Under reducing conditions zinc is bound to the reactive cysteines and the protein is inactive.

Its subcellular location is the cytoplasm. Its function is as follows. Redox regulated molecular chaperone. Protects both thermally unfolding and oxidatively damaged proteins from irreversible aggregation. Plays an important role in the bacterial defense system toward oxidative stress. In Streptococcus pneumoniae (strain P1031), this protein is 33 kDa chaperonin.